The chain runs to 154 residues: Transcriptional repressor NrdR (154 aa).

A zinc finger spans residues 3–34 (CPYCQSEDTQVKDSRPAEDGAAIRRRRACPVC). The ATP-cone domain occupies 49-139 (LVVVKRTGRK…VYRNFREAKD (91 aa)).

It belongs to the NrdR family. Zn(2+) serves as cofactor.

Its function is as follows. Negatively regulates transcription of bacterial ribonucleotide reductase nrd genes and operons by binding to NrdR-boxes. The protein is Transcriptional repressor NrdR of Chelativorans sp. (strain BNC1).